Reading from the N-terminus, the 372-residue chain is 4-hydroxy-3-methylbut-2-en-1-yl diphosphate synthase (flavodoxin) (372 aa).

The [4Fe-4S] cluster site is built by Cys270, Cys273, Cys305, and Glu312.

Belongs to the IspG family. The cofactor is [4Fe-4S] cluster.

The catalysed reaction is (2E)-4-hydroxy-3-methylbut-2-enyl diphosphate + oxidized [flavodoxin] + H2O + 2 H(+) = 2-C-methyl-D-erythritol 2,4-cyclic diphosphate + reduced [flavodoxin]. Its pathway is isoprenoid biosynthesis; isopentenyl diphosphate biosynthesis via DXP pathway; isopentenyl diphosphate from 1-deoxy-D-xylulose 5-phosphate: step 5/6. Functionally, converts 2C-methyl-D-erythritol 2,4-cyclodiphosphate (ME-2,4cPP) into 1-hydroxy-2-methyl-2-(E)-butenyl 4-diphosphate. This Citrobacter koseri (strain ATCC BAA-895 / CDC 4225-83 / SGSC4696) protein is 4-hydroxy-3-methylbut-2-en-1-yl diphosphate synthase (flavodoxin).